Here is a 118-residue protein sequence, read N- to C-terminus: NADH-quinone oxidoreductase subunit A 2 (118 aa).

The next 3 membrane-spanning stretches (helical) occupy residues 5–25 (YLPIIVLVVVAVLFGCGSLIF), 62–82 (IIAMLFILFDIEAVFLYPWAV), and 87–107 (LGMFGLMEMGVFIVILFVGYI).

It belongs to the complex I subunit 3 family. As to quaternary structure, NDH-1 is composed of 14 different subunits. Subunits NuoA, H, J, K, L, M, N constitute the membrane sector of the complex.

It is found in the cell inner membrane. It catalyses the reaction a quinone + NADH + 5 H(+)(in) = a quinol + NAD(+) + 4 H(+)(out). Its function is as follows. NDH-1 shuttles electrons from NADH, via FMN and iron-sulfur (Fe-S) centers, to quinones in the respiratory chain. The immediate electron acceptor for the enzyme in this species is believed to be ubiquinone. Couples the redox reaction to proton translocation (for every two electrons transferred, four hydrogen ions are translocated across the cytoplasmic membrane), and thus conserves the redox energy in a proton gradient. This Geotalea uraniireducens (strain Rf4) (Geobacter uraniireducens) protein is NADH-quinone oxidoreductase subunit A 2.